Consider the following 75-residue polypeptide: UPF0352 protein VF_1649 (75 aa).

This sequence belongs to the UPF0352 family.

This chain is UPF0352 protein VF_1649, found in Aliivibrio fischeri (strain ATCC 700601 / ES114) (Vibrio fischeri).